Reading from the N-terminus, the 435-residue chain is Elongation factor 1-alpha (435 aa).

The tr-type G domain occupies 5–226 (KTHINLVVIG…DTMEPPKRPT (222 aa)). The tract at residues 14-21 (GHVDSGKS) is G1. GTP is bound at residue 14–21 (GHVDSGKS). The interval 70-74 (GITID) is G2. Residues 91–94 (DAPG) are G3. GTP contacts are provided by residues 91–95 (DAPGH) and 151–154 (NKMD). Positions 151-154 (NKMD) are G4. Residues 190–192 (SGF) are G5.

Belongs to the TRAFAC class translation factor GTPase superfamily. Classic translation factor GTPase family. EF-Tu/EF-1A subfamily.

Its subcellular location is the cytoplasm. In terms of biological role, this protein promotes the GTP-dependent binding of aminoacyl-tRNA to the A-site of ribosomes during protein biosynthesis. In Cryptosporidium parvum, this protein is Elongation factor 1-alpha.